A 286-amino-acid chain; its full sequence is MISSKTSFIALIGNPVSHSFSPIMQNAAFQYLGLDLIYFAIPCKDEDLELVLNSLKKINCKGLNITIPHKEKVFNLCSEISPIARKLKAINTLKLNSENEWSATNTDLEGFIYPLKNLNLAKKKSIVLGSGGAAKSVIQGLINLNLSKISVIGRNKSSLDELIKNFGNQIELHSFLSNDNQTQNLIEEADLIINTTPVGMKTAKNEMNLLPYGDYFWRSLNSKTIVYDLIYNPAPTHLLKFSANKGCMTIDGLQMLVAQGLKSLSFWTNGLEVPFHIMNDALKNHL.

Shikimate-binding positions include 19-21 and Thr-66; that span reads SFS. Lys-70 functions as the Proton acceptor in the catalytic mechanism. 2 residues coordinate shikimate: Asn-91 and Asp-107. NADP(+) is bound by residues 129–133 and Leu-229; that span reads GSGGA. Tyr-231 contacts shikimate. Gly-252 is an NADP(+) binding site.

The protein belongs to the shikimate dehydrogenase family. Homodimer.

The enzyme catalyses shikimate + NADP(+) = 3-dehydroshikimate + NADPH + H(+). It functions in the pathway metabolic intermediate biosynthesis; chorismate biosynthesis; chorismate from D-erythrose 4-phosphate and phosphoenolpyruvate: step 4/7. Involved in the biosynthesis of the chorismate, which leads to the biosynthesis of aromatic amino acids. Catalyzes the reversible NADPH linked reduction of 3-dehydroshikimate (DHSA) to yield shikimate (SA). This chain is Shikimate dehydrogenase (NADP(+)), found in Prochlorococcus marinus (strain MIT 9301).